A 144-amino-acid chain; its full sequence is Large ribosomal subunit protein uL13 (144 aa).

The protein belongs to the universal ribosomal protein uL13 family. Part of the 50S ribosomal subunit.

This protein is one of the early assembly proteins of the 50S ribosomal subunit, although it is not seen to bind rRNA by itself. It is important during the early stages of 50S assembly. The chain is Large ribosomal subunit protein uL13 from Clostridium botulinum (strain ATCC 19397 / Type A).